A 338-amino-acid polypeptide reads, in one-letter code: Nucleoid-associated protein CGSHiGG_07705 (338 aa).

The protein belongs to the YejK family.

Its subcellular location is the cytoplasm. It is found in the nucleoid. This is Nucleoid-associated protein CGSHiGG_07705 from Haemophilus influenzae (strain PittGG).